Reading from the N-terminus, the 477-residue chain is MDLVTRRIRGALGIAGPLLFLEGVPRARLGEVVRIRGEPEANGRAAEERSGQVIALSRDRIAVQVLEETRGLAPARAEVTLTGQVARLGVSRGMLGRVLDGLGRPADGLPPPVPEARPAIHGAALNVTRREKPSDFIETGVSAIDGMNTLVRGQKLPVFSCAGLPASRLAAQIVCQARVRGGEAFAVVFAAMGSPFREYHAFLEAFRAAGVLARTVVFLNRAEDPPIERLMTPRCALTCAEHLAFVHGLHVLVVLTDVTSYCEALREVALAREEVPGRRGYPGYMYTDLATIFERAGRVRGRPGSLTQLPVLTMPDDDLTHPIPDLTGYITEGQIVLSRDLDRRGVYPPIDVLPSLSRLMGLGAGPGKTRDDHRPVADQLYAFYARGRDVRRMAAIVGAASLGEEEKRLLAFADAFEDELVGQGGTFRTIEDTLEAGWRLLSGFPPAALTRIPERLLRARSARPAAGAAAVSGGAVA.

The protein belongs to the ATPase alpha/beta chains family.

In terms of biological role, produces ATP from ADP in the presence of a proton gradient across the membrane. The V-type beta chain is a regulatory subunit. The polypeptide is V-type ATP synthase beta chain (Anaeromyxobacter dehalogenans (strain 2CP-1 / ATCC BAA-258)).